The chain runs to 207 residues: Small ribosomal subunit protein uS4 (207 aa).

The region spanning 96–159 (RRLDNVVYRL…RASTFIADNI (64 aa)) is the S4 RNA-binding domain.

It belongs to the universal ribosomal protein uS4 family. Part of the 30S ribosomal subunit. Contacts protein S5. The interaction surface between S4 and S5 is involved in control of translational fidelity.

Functionally, one of the primary rRNA binding proteins, it binds directly to 16S rRNA where it nucleates assembly of the body of the 30S subunit. With S5 and S12 plays an important role in translational accuracy. The chain is Small ribosomal subunit protein uS4 from Leptospira borgpetersenii serovar Hardjo-bovis (strain JB197).